We begin with the raw amino-acid sequence, 137 residues long: L-ectoine synthase (137 aa).

The tract at residues 118–137 is disordered; that stretch reads VHREDGSYAPADEADDQKPL.

This sequence belongs to the ectoine synthase family.

The catalysed reaction is (2S)-4-acetamido-2-aminobutanoate = L-ectoine + H2O. Its pathway is amine and polyamine biosynthesis; ectoine biosynthesis; L-ectoine from L-aspartate 4-semialdehyde: step 3/3. Its activity is regulated as follows. Seems to require potassium ions for its activity and stability. Slightly inhibited by N-ethylmaleimide. Its function is as follows. Catalyzes the circularization of gamma-N-acetyl-alpha,gamma-diaminobutyric acid (ADABA) to ectoine (1,4,5,6-tetrahydro-2-methyl-4-pyrimidine carboxylic acid), which is an excellent osmoprotectant. Does not act on N-acetylated amino acids like N-alpha-acetyl-L-asparagine,N-alpha-acetyl-L-ornithine, N-alpha-acetyl-L-lysine and N-epsilon-acetyl-L-lysine. The polypeptide is L-ectoine synthase (ectC) (Halomonas elongata (strain ATCC 33173 / DSM 2581 / NBRC 15536 / NCIMB 2198 / 1H9)).